A 128-amino-acid chain; its full sequence is Putative lipid-binding protein At4g00165 (128 aa).

The N-terminal stretch at 1-23 (MGISKALRSLLILLLLNITFFFG) is a signal peptide. 4 cysteine pairs are disulfide-bonded: Cys-34–Cys-90, Cys-46–Cys-76, Cys-56–Cys-75, and Cys-92–Cys-128.

It belongs to the plant LTP family. PEARLI1 subfamily.

The protein resides in the secreted. This Arabidopsis thaliana (Mouse-ear cress) protein is Putative lipid-binding protein At4g00165.